A 220-amino-acid polypeptide reads, in one-letter code: Large ribosomal subunit protein bL21c (220 aa).

Belongs to the bacterial ribosomal protein bL21 family. In terms of assembly, part of the 50S ribosomal subunit.

Its subcellular location is the plastid. The protein localises to the chloroplast. This protein binds to 23S ribosomal RNA in the presence of protein L20. The polypeptide is Large ribosomal subunit protein bL21c (RPL21) (Arabidopsis thaliana (Mouse-ear cress)).